The sequence spans 484 residues: Cobyric acid synthase (484 aa).

Residues 251–438 enclose the GATase cobBQ-type domain; it reads ALKIAVPVLP…LHGLFCSDAY (188 aa). Cys-333 acts as the Nucleophile in catalysis. His-430 is a catalytic residue.

It belongs to the CobB/CobQ family. CobQ subfamily.

The protein operates within cofactor biosynthesis; adenosylcobalamin biosynthesis. Functionally, catalyzes amidations at positions B, D, E, and G on adenosylcobyrinic A,C-diamide. NH(2) groups are provided by glutamine, and one molecule of ATP is hydrogenolyzed for each amidation. The sequence is that of Cobyric acid synthase from Rhizobium rhizogenes (strain K84 / ATCC BAA-868) (Agrobacterium radiobacter).